Consider the following 164-residue polypeptide: Bacterial microcompartment shell protein EutK (164 aa).

The 85-residue stretch at 4–88 folds into the BMC domain; it reads ALGLLEVDGM…PEEDTQWLIG (85 aa). The EutK-Ctail domain occupies 108-164; that stretch reads EFAEALLALLASVRQGMTAGEVAAHFGWPLEQARNVLEQLFSDGALRKRSSRYRIKN.

It belongs to the bacterial microcompartments protein family. As to quaternary structure, monomeric in solution.

It is found in the bacterial microcompartment. The protein operates within amine and polyamine degradation; ethanolamine degradation. A component of the bacterial microcompartment (BMC) shell dedicated to ethanolamine degradation. Expression of eutK, eutL, eutM, eutN, eutS (eutSMNLK) in E.coli leads to formation of a single BMC. Coexpression of eutQ with eutSMNLK permits E.coli to make cells with more than one mobile BMC, as is usual in vivo. Functionally, the ethanolamine (EA) catabolic bacterial microcompartment (BMC) probably concentrates low levels of ethanolamine catabolic enzymes, concentrates volatile reaction intermediates, keeps the level of toxic acetaldehyde low, generates enough acetyl-CoA to support cell growth, and maintains a pool of free coenzyme A (CoA) and NAD. Deletion of BMC genes (eutK, eutL, eutM) restores growth of eutD deletions, suggesting there are dedicated pools of coenzyme A (CoA) and NAD in the BMC. Its function is as follows. Expression of the eut operon allows this bacteria to use ethanolamine as a carbon, nitrogen and energy source. It relies on cobalamin (vitamin B12) both as a cofactor for the ethanolamine ammonia-lyase (EAL) activity and to induce the operon. EA enhances bacterial survival in macrophages in a concentration-dependent manner, suggesting it is an important nutrient during infection. The polypeptide is Bacterial microcompartment shell protein EutK (eutK) (Salmonella typhimurium (strain LT2 / SGSC1412 / ATCC 700720)).